Reading from the N-terminus, the 655-residue chain is uncharacterized protein (655 aa).

The first 23 residues, 1 to 23 (MKRTIKYLSFLGLIPFLSITTIS), serve as a signal peptide directing secretion. C24 carries N-palmitoyl cysteine lipidation. C24 carries the S-diacylglycerol cysteine lipid modification.

Belongs to the MG067/MG068/MG395 family.

The protein resides in the cell membrane. This is an uncharacterized protein from Mycoplasma capricolum subsp. capricolum (strain California kid / ATCC 27343 / NCTC 10154).